The sequence spans 465 residues: ATP synthase subunit beta (465 aa).

153-160 serves as a coordination point for ATP; it reads GGAGVGKT.

The protein belongs to the ATPase alpha/beta chains family. As to quaternary structure, F-type ATPases have 2 components, CF(1) - the catalytic core - and CF(0) - the membrane proton channel. CF(1) has five subunits: alpha(3), beta(3), gamma(1), delta(1), epsilon(1). CF(0) has three main subunits: a(1), b(2) and c(9-12). The alpha and beta chains form an alternating ring which encloses part of the gamma chain. CF(1) is attached to CF(0) by a central stalk formed by the gamma and epsilon chains, while a peripheral stalk is formed by the delta and b chains.

Its subcellular location is the cell membrane. The enzyme catalyses ATP + H2O + 4 H(+)(in) = ADP + phosphate + 5 H(+)(out). Functionally, produces ATP from ADP in the presence of a proton gradient across the membrane. The catalytic sites are hosted primarily by the beta subunits. The protein is ATP synthase subunit beta of Clostridium perfringens (strain SM101 / Type A).